The chain runs to 374 residues: RNA polymerase sigma factor SigA (374 aa).

The segment at 141–211 (LAEANLRLVV…TRAIADQART (71 aa)) is sigma-70 factor domain-2. Residues 165-168 (DLIQ) carry the Interaction with polymerase core subunit RpoC motif. Residues 220-296 (ETINKLIRVQ…DQDATSPSDH (77 aa)) form a sigma-70 factor domain-3 region. Residues 309 to 362 (VLDTLTDREENVLRLRFGLDDGRTRTLEEVGRVFGVTRERIRQIEAKALRKLRH) are sigma-70 factor domain-4. The segment at residues 335–354 (LEEVGRVFGVTRERIRQIEA) is a DNA-binding region (H-T-H motif).

Belongs to the sigma-70 factor family. RpoD/SigA subfamily. In terms of assembly, interacts transiently with the RNA polymerase catalytic core.

It localises to the cytoplasm. Sigma factors are initiation factors that promote the attachment of RNA polymerase to specific initiation sites and are then released. This sigma factor is the primary sigma factor during exponential growth. The protein is RNA polymerase sigma factor SigA of Listeria innocua serovar 6a (strain ATCC BAA-680 / CLIP 11262).